The following is a 160-amino-acid chain: Cytochrome b6-f complex subunit 4 (160 aa).

Transmembrane regions (helical) follow at residues 36 to 56 (LLYI…GLAV), 95 to 115 (LLGV…PFLE), and 131 to 151 (TVFL…TLPI).

The protein belongs to the cytochrome b family. PetD subfamily. The 4 large subunits of the cytochrome b6-f complex are cytochrome b6, subunit IV (17 kDa polypeptide, petD), cytochrome f and the Rieske protein, while the 4 small subunits are petG, petL, petM and petN. The complex functions as a dimer.

It localises to the plastid. It is found in the chloroplast thylakoid membrane. Its function is as follows. Component of the cytochrome b6-f complex, which mediates electron transfer between photosystem II (PSII) and photosystem I (PSI), cyclic electron flow around PSI, and state transitions. The polypeptide is Cytochrome b6-f complex subunit 4 (Gossypium barbadense (Sea Island cotton)).